We begin with the raw amino-acid sequence, 502 residues long: Glycerol kinase (502 aa).

An ADP-binding site is contributed by threonine 14. Positions 14, 15, and 16 each coordinate ATP. Threonine 14 provides a ligand contact to sn-glycerol 3-phosphate. Arginine 18 is a binding site for ADP. Sn-glycerol 3-phosphate is bound by residues arginine 84, glutamate 85, tyrosine 136, and aspartate 246. Arginine 84, glutamate 85, tyrosine 136, aspartate 246, and glutamine 247 together coordinate glycerol. Positions 268 and 311 each coordinate ADP. Residues threonine 268, glycine 311, glutamine 315, and glycine 412 each contribute to the ATP site. Glycine 412 and asparagine 416 together coordinate ADP.

It belongs to the FGGY kinase family. In terms of assembly, homotetramer and homodimer (in equilibrium). Heterodimer with EIIA-Glc. Binds 1 zinc ion per glycerol kinase EIIA-Glc dimer. The zinc ion is important for dimerization.

The enzyme catalyses glycerol + ATP = sn-glycerol 3-phosphate + ADP + H(+). The protein operates within polyol metabolism; glycerol degradation via glycerol kinase pathway; sn-glycerol 3-phosphate from glycerol: step 1/1. With respect to regulation, activity of this regulatory enzyme is affected by several metabolites. Allosterically and non-competitively inhibited by fructose 1,6-bisphosphate (FBP) and unphosphorylated phosphocarrier protein EIIA-Glc (III-Glc), an integral component of the bacterial phosphotransferase (PTS) system. Functionally, key enzyme in the regulation of glycerol uptake and metabolism. Catalyzes the phosphorylation of glycerol to yield sn-glycerol 3-phosphate. The protein is Glycerol kinase of Salmonella typhimurium (strain LT2 / SGSC1412 / ATCC 700720).